A 303-amino-acid polypeptide reads, in one-letter code: UPF0282 protein PAE3680 (303 aa).

The protein belongs to the UPF0282 family.

The protein is UPF0282 protein PAE3680 of Pyrobaculum aerophilum (strain ATCC 51768 / DSM 7523 / JCM 9630 / CIP 104966 / NBRC 100827 / IM2).